The sequence spans 64 residues: Prokaryotic ubiquitin-like protein Pup (64 aa).

The segment at 20 to 58 (QELTLAASHVVSDVSEVDDLLDEIDGLLAENAEDFVTGF) is ARC ATPase binding. Residue E64 forms an Isoglutamyl lysine isopeptide (Glu-Lys) (interchain with K-? in acceptor proteins) linkage.

This sequence belongs to the prokaryotic ubiquitin-like protein family. As to quaternary structure, strongly interacts with the proteasome-associated ATPase ARC through a hydrophobic interface; the interacting region of Pup lies in its C-terminal half. There is one Pup binding site per ARC hexamer ring.

It functions in the pathway protein degradation; proteasomal Pup-dependent pathway. Protein modifier that is covalently attached to lysine residues of substrate proteins, thereby targeting them for proteasomal degradation. The tagging system is termed pupylation. The polypeptide is Prokaryotic ubiquitin-like protein Pup (Rothia mucilaginosa (strain DY-18) (Stomatococcus mucilaginosus)).